Reading from the N-terminus, the 884-residue chain is Alanine--tRNA ligase (884 aa).

Zn(2+) contacts are provided by His570, His574, Cys676, and His680.

The protein belongs to the class-II aminoacyl-tRNA synthetase family. Zn(2+) is required as a cofactor.

Its subcellular location is the cytoplasm. The enzyme catalyses tRNA(Ala) + L-alanine + ATP = L-alanyl-tRNA(Ala) + AMP + diphosphate. Catalyzes the attachment of alanine to tRNA(Ala) in a two-step reaction: alanine is first activated by ATP to form Ala-AMP and then transferred to the acceptor end of tRNA(Ala). Also edits incorrectly charged Ser-tRNA(Ala) and Gly-tRNA(Ala) via its editing domain. The sequence is that of Alanine--tRNA ligase from Lawsonia intracellularis (strain PHE/MN1-00).